Consider the following 668-residue polypeptide: uncharacterized protein (668 aa).

The next 9 helical transmembrane spans lie at 182-202 (FAFA…GILG), 208-228 (PYSY…IQFW), 286-306 (VPLF…AFIV), 321-341 (IVSL…TFIY), 379-399 (ALFL…PHYI), 430-450 (IYFL…VPQL), 499-519 (FVLM…APIF), 557-577 (LSLL…FYSS), and 587-607 (VIAA…RMFI).

Its subcellular location is the membrane. This is an uncharacterized protein from Schizosaccharomyces pombe (strain 972 / ATCC 24843) (Fission yeast).